The primary structure comprises 76 residues: uncharacterized protein (76 aa).

3 consecutive transmembrane segments (helical) span residues 2 to 22 (LKVA…YSLF), 28 to 48 (LLIV…VEAI), and 56 to 76 (EYLL…KFII).

The protein localises to the cell membrane. This is an uncharacterized protein from Bacillus subtilis (strain 168).